Consider the following 89-residue polypeptide: Small ribosomal subunit protein uS15 (89 aa).

Belongs to the universal ribosomal protein uS15 family. Part of the 30S ribosomal subunit. Forms a bridge to the 50S subunit in the 70S ribosome, contacting the 23S rRNA.

Functionally, one of the primary rRNA binding proteins, it binds directly to 16S rRNA where it helps nucleate assembly of the platform of the 30S subunit by binding and bridging several RNA helices of the 16S rRNA. In terms of biological role, forms an intersubunit bridge (bridge B4) with the 23S rRNA of the 50S subunit in the ribosome. The sequence is that of Small ribosomal subunit protein uS15 from Nitratiruptor sp. (strain SB155-2).